Reading from the N-terminus, the 81-residue chain is uncharacterized protein (81 aa).

2 helical membrane passes run 1–21 (MTLF…FSLL) and 27–47 (IFIY…HHFF).

Its subcellular location is the membrane. This is an uncharacterized protein from Saccharomyces cerevisiae (strain ATCC 204508 / S288c) (Baker's yeast).